Consider the following 161-residue polypeptide: 2-C-methyl-D-erythritol 2,4-cyclodiphosphate synthase (161 aa).

The a divalent metal cation site is built by aspartate 10 and histidine 12. 4-CDP-2-C-methyl-D-erythritol 2-phosphate-binding positions include 10-12 (DVH) and 36-37 (HS). Histidine 44 is a binding site for a divalent metal cation. Residues 58 to 60 (DIG), 63 to 67 (FSDTD), and arginine 144 contribute to the 4-CDP-2-C-methyl-D-erythritol 2-phosphate site.

This sequence belongs to the IspF family. In terms of assembly, homotrimer. The cofactor is a divalent metal cation.

The catalysed reaction is 4-CDP-2-C-methyl-D-erythritol 2-phosphate = 2-C-methyl-D-erythritol 2,4-cyclic diphosphate + CMP. Its pathway is isoprenoid biosynthesis; isopentenyl diphosphate biosynthesis via DXP pathway; isopentenyl diphosphate from 1-deoxy-D-xylulose 5-phosphate: step 4/6. Involved in the biosynthesis of isopentenyl diphosphate (IPP) and dimethylallyl diphosphate (DMAPP), two major building blocks of isoprenoid compounds. Catalyzes the conversion of 4-diphosphocytidyl-2-C-methyl-D-erythritol 2-phosphate (CDP-ME2P) to 2-C-methyl-D-erythritol 2,4-cyclodiphosphate (ME-CPP) with a corresponding release of cytidine 5-monophosphate (CMP). This chain is 2-C-methyl-D-erythritol 2,4-cyclodiphosphate synthase, found in Burkholderia ambifaria (strain MC40-6).